Consider the following 348-residue polypeptide: 4-hydroxy-2-oxovalerate aldolase 3 (348 aa).

The Pyruvate carboxyltransferase domain maps to 8 to 260 (ITVHDMTLRD…ETGVDVWKIQ (253 aa)). Substrate is bound at residue 16–17 (RD). Residue D17 participates in Mn(2+) binding. H20 (proton acceptor) is an active-site residue. Residues S170 and H199 each contribute to the substrate site. Residues H199 and H201 each contribute to the Mn(2+) site. Substrate is bound at residue Y290.

Belongs to the 4-hydroxy-2-oxovalerate aldolase family.

It catalyses the reaction (S)-4-hydroxy-2-oxopentanoate = acetaldehyde + pyruvate. The protein is 4-hydroxy-2-oxovalerate aldolase 3 of Burkholderia lata (strain ATCC 17760 / DSM 23089 / LMG 22485 / NCIMB 9086 / R18194 / 383).